Here is a 136-residue protein sequence, read N- to C-terminus: D-ribose pyranase (136 aa).

H20 serves as the catalytic Proton donor. Substrate is bound by residues D28, H98, and 120 to 122 (YAN).

The protein belongs to the RbsD / FucU family. RbsD subfamily. In terms of assembly, homodecamer.

It localises to the cytoplasm. The enzyme catalyses beta-D-ribopyranose = beta-D-ribofuranose. It functions in the pathway carbohydrate metabolism; D-ribose degradation; D-ribose 5-phosphate from beta-D-ribopyranose: step 1/2. In terms of biological role, catalyzes the interconversion of beta-pyran and beta-furan forms of D-ribose. This is D-ribose pyranase from Geobacillus kaustophilus (strain HTA426).